Reading from the N-terminus, the 434-residue chain is Nuclear receptor subfamily 1 group I member 2 (434 aa).

A DNA-binding region (nuclear receptor) is located at residues Pro38–Met107. NR C4-type zinc fingers lie at residues Cys41–Cys61 and Cys77–Cys102. Positions Arg66–Arg92 match the Bipartite nuclear localization signal motif. The interval Lys108–Glu145 is hinge. Residues Glu146–Gly433 form the NR LBD domain. Residues Ser247, Gln285–Phe288, and His407 contribute to the hyperforin site.

Belongs to the nuclear hormone receptor family. NR1 subfamily. Heterodimer with RXRA. Interacts with NCOA1. Interacts (via domain NR LBD) with CRY1 and CRY2 in a ligand-dependent manner.

The protein localises to the nucleus. Functionally, nuclear receptor that binds and is activated by a variety of endogenous and xenobiotic compounds. Transcription factor that activates the transcription of multiple genes involved in the metabolism and secretion of potentially harmful xenobiotics, endogenous compounds and drugs. Response to specific ligands is species-specific, due to differences in the ligand-binding domain. Activated by naturally occurring steroids, such as pregnenolone and progesterone. Binds to a response element in the promoters of the CYP3A4 and ABCB1/MDR1 genes. The polypeptide is Nuclear receptor subfamily 1 group I member 2 (NR1I2) (Macaca mulatta (Rhesus macaque)).